The chain runs to 79 residues: Short neurotoxin 8 (79 aa).

The N-terminal stretch at 1–21 is a signal peptide; that stretch reads MKTLLLTLVMVTIMCLDLGYT. Cystine bridges form between Cys-24/Cys-41, Cys-34/Cys-59, Cys-63/Cys-71, and Cys-72/Cys-77.

This sequence belongs to the three-finger toxin family. Short-chain subfamily. Type III alpha-neurotoxin sub-subfamily. In terms of tissue distribution, expressed by the venom gland.

It is found in the secreted. Its function is as follows. Binds with high affinity to muscle nicotinic acetylcholine receptor (nAChR) and hinders acetylcholine binding to the receptor, thereby impairing neuromuscular transmission. Causes muscle paralysis, spasms and increased respiration. The chain is Short neurotoxin 8 from Pseudonaja textilis (Eastern brown snake).